Reading from the N-terminus, the 482-residue chain is Ribosomal RNA small subunit methyltransferase F (482 aa).

S-adenosyl-L-methionine-binding positions include 119–125, glutamate 143, aspartate 170, and aspartate 188; that span reads ASAPGSK. The active-site Nucleophile is cysteine 241.

The protein belongs to the class I-like SAM-binding methyltransferase superfamily. RsmB/NOP family.

Its subcellular location is the cytoplasm. It catalyses the reaction cytidine(1407) in 16S rRNA + S-adenosyl-L-methionine = 5-methylcytidine(1407) in 16S rRNA + S-adenosyl-L-homocysteine + H(+). Its function is as follows. Specifically methylates the cytosine at position 1407 (m5C1407) of 16S rRNA. The protein is Ribosomal RNA small subunit methyltransferase F of Shewanella sp. (strain MR-7).